Consider the following 255-residue polypeptide: Taurine import ATP-binding protein TauB (255 aa).

The ABC transporter domain occupies 2–229 (LNVSGLWAEY…RYAEGEPCRA (228 aa)). Position 34-41 (34-41 (GPSGCGKT)) interacts with ATP.

The protein belongs to the ABC transporter superfamily. Taurine importer (TC 3.A.1.17.1) family. In terms of assembly, the complex is composed of two ATP-binding proteins (TauB), two transmembrane proteins (TauC) and a solute-binding protein (TauA).

The protein localises to the cell inner membrane. The enzyme catalyses taurine(out) + ATP + H2O = taurine(in) + ADP + phosphate + H(+). Part of the ABC transporter complex TauABC involved in taurine import. Responsible for energy coupling to the transport system. This is Taurine import ATP-binding protein TauB from Yersinia pseudotuberculosis serotype I (strain IP32953).